We begin with the raw amino-acid sequence, 322 residues long: uncharacterized protein (322 aa).

Residues 1-17 (MASMAAAIAASRSAVMS) are compositionally biased toward low complexity. The tract at residues 1–22 (MASMAAAIAASRSAVMSGNRPL) is disordered. Ala-2 carries the post-translational modification N-acetylalanine. Ser-37 carries the phosphoserine modification. Residues 81–104 (AAAADAGDVRDPARFPGLRGPTGQ) form a disordered region. Ser-130 bears the Phosphoserine mark. Polar residues-rich tracts occupy residues 142–153 (QEPSAATVTSDA) and 161–177 (QGTQ…SSSL). A disordered region spans residues 142-301 (QEPSAATVTS…DDDALFSEPA (160 aa)). Position 176 is a phosphoserine (Ser-176). The segment covering 183 to 203 (ARKEEEAPFWKINAERSREGP) has biased composition (basic and acidic residues). Residues 245-255 (QEQQTLPSVSA) are compositionally biased toward polar residues.

It localises to the cytoplasm. This is an uncharacterized protein from Mus musculus (Mouse).